The chain runs to 507 residues: Maturase K (507 aa).

It belongs to the intron maturase 2 family. MatK subfamily.

The protein resides in the plastid. It is found in the chloroplast. In terms of biological role, usually encoded in the trnK tRNA gene intron. Probably assists in splicing its own and other chloroplast group II introns. The protein is Maturase K of Ranunculus repens (Creeping buttercup).